A 105-amino-acid polypeptide reads, in one-letter code: MPQITVVNQSGEESSVEASEGRTLMEVIRDSGFDELLALCGGCCSCATCHVHIDPAFMDKLPEMSEDENDLLDSSDHRNEYSRLSCQIPVTGALEGIKVTIAQED.

The 2Fe-2S ferredoxin-type domain occupies 2–105 (PQITVVNQSG…GIKVTIAQED (104 aa)). [2Fe-2S] cluster-binding residues include cysteine 40, cysteine 46, cysteine 49, and cysteine 86.

This sequence belongs to the adrenodoxin/putidaredoxin family. Monomer. The dicamba O-demethylase multicomponent enzyme system is composed of an oxygenase component (DdmC) and an electron transfer component formed by a ferredoxin reductase (DdmA1) and a ferredoxin (DdmB). In vitro, dicamba O-demethylase assays in which DdmA2 is substituted for DdmA1 demonstrate that the two enzymes possess nearly identical activities. It depends on [2Fe-2S] cluster as a cofactor.

Its function is as follows. Component of the dicamba O-demethylase multicomponent enzyme system involved in the degradation of the herbicide dicamba. In vitro, functions as an intermediate electron transfer protein. The chain is Dicamba O-demethylase, ferredoxin component from Stenotrophomonas maltophilia (Pseudomonas maltophilia).